The sequence spans 415 residues: Gamma-glutamyl phosphate reductase (415 aa).

It belongs to the gamma-glutamyl phosphate reductase family.

It localises to the cytoplasm. It carries out the reaction L-glutamate 5-semialdehyde + phosphate + NADP(+) = L-glutamyl 5-phosphate + NADPH + H(+). The protein operates within amino-acid biosynthesis; L-proline biosynthesis; L-glutamate 5-semialdehyde from L-glutamate: step 2/2. Catalyzes the NADPH-dependent reduction of L-glutamate 5-phosphate into L-glutamate 5-semialdehyde and phosphate. The product spontaneously undergoes cyclization to form 1-pyrroline-5-carboxylate. This Parabacteroides distasonis (strain ATCC 8503 / DSM 20701 / CIP 104284 / JCM 5825 / NCTC 11152) protein is Gamma-glutamyl phosphate reductase.